The chain runs to 101 residues: Putative pterin-4-alpha-carbinolamine dehydratase (101 aa).

This sequence belongs to the pterin-4-alpha-carbinolamine dehydratase family.

The enzyme catalyses (4aS,6R)-4a-hydroxy-L-erythro-5,6,7,8-tetrahydrobiopterin = (6R)-L-erythro-6,7-dihydrobiopterin + H2O. The protein is Putative pterin-4-alpha-carbinolamine dehydratase of Rhodopseudomonas palustris (strain BisA53).